A 331-amino-acid chain; its full sequence is uncharacterized protein (331 aa).

This sequence belongs to the IIV-6 335L family.

This is an uncharacterized protein from Invertebrate iridescent virus 6 (IIV-6).